We begin with the raw amino-acid sequence, 283 residues long: Large ribosomal subunit protein uL2 (283 aa).

Disordered stretches follow at residues 37 to 59 (AKKK…RGGG) and 219 to 283 (HKGI…RNSK). Positions 256–269 (WGKRHMGVKTRNNK) are enriched in basic residues.

Belongs to the universal ribosomal protein uL2 family. In terms of assembly, part of the 50S ribosomal subunit. Forms a bridge to the 30S subunit in the 70S ribosome.

In terms of biological role, one of the primary rRNA binding proteins. Required for association of the 30S and 50S subunits to form the 70S ribosome, for tRNA binding and peptide bond formation. It has been suggested to have peptidyltransferase activity; this is somewhat controversial. Makes several contacts with the 16S rRNA in the 70S ribosome. This chain is Large ribosomal subunit protein uL2, found in Mycoplasmoides gallisepticum (strain R(low / passage 15 / clone 2)) (Mycoplasma gallisepticum).